The following is a 547-amino-acid chain: CTP synthase (547 aa).

Residues 1-267 (MTKFVFVTGG…AQQTLALLNL (267 aa)) are amidoligase domain. Ser-13 contacts CTP. Position 13 (Ser-13) interacts with UTP. Residues 14 to 19 (SIGKGI) and Asp-71 each bind ATP. The Mg(2+) site is built by Asp-71 and Glu-141. Residues 148–150 (DIE), 188–193 (KTKPTQ), and Lys-224 each bind CTP. UTP-binding positions include 188-193 (KTKPTQ) and Lys-224. Residues 292–534 (EIALVGKYVQ…VKAAVDHYST (243 aa)) enclose the Glutamine amidotransferase type-1 domain. Gly-354 is an L-glutamine binding site. The active-site Nucleophile; for glutamine hydrolysis is Cys-381. L-glutamine is bound by residues 382-385 (LGMQ), Glu-405, and Arg-462. Catalysis depends on residues His-507 and Glu-509.

It belongs to the CTP synthase family. Homotetramer.

The enzyme catalyses UTP + L-glutamine + ATP + H2O = CTP + L-glutamate + ADP + phosphate + 2 H(+). The catalysed reaction is L-glutamine + H2O = L-glutamate + NH4(+). It carries out the reaction UTP + NH4(+) + ATP = CTP + ADP + phosphate + 2 H(+). The protein operates within pyrimidine metabolism; CTP biosynthesis via de novo pathway; CTP from UDP: step 2/2. With respect to regulation, allosterically activated by GTP, when glutamine is the substrate; GTP has no effect on the reaction when ammonia is the substrate. The allosteric effector GTP functions by stabilizing the protein conformation that binds the tetrahedral intermediate(s) formed during glutamine hydrolysis. Inhibited by the product CTP, via allosteric rather than competitive inhibition. Its function is as follows. Catalyzes the ATP-dependent amination of UTP to CTP with either L-glutamine or ammonia as the source of nitrogen. Regulates intracellular CTP levels through interactions with the four ribonucleotide triphosphates. This Rippkaea orientalis (strain PCC 8801 / RF-1) (Cyanothece sp. (strain PCC 8801)) protein is CTP synthase.